The primary structure comprises 186 residues: Large ribosomal subunit protein eL15 (186 aa).

The interval Arg-163–Arg-186 is disordered. Positions Lys-170–Gly-179 are enriched in basic residues.

Belongs to the eukaryotic ribosomal protein eL15 family.

The protein is Large ribosomal subunit protein eL15 of Methanosphaera stadtmanae (strain ATCC 43021 / DSM 3091 / JCM 11832 / MCB-3).